A 236-amino-acid polypeptide reads, in one-letter code: Leucyl/phenylalanyl-tRNA--protein transferase (236 aa).

This sequence belongs to the L/F-transferase family.

Its subcellular location is the cytoplasm. It carries out the reaction N-terminal L-lysyl-[protein] + L-leucyl-tRNA(Leu) = N-terminal L-leucyl-L-lysyl-[protein] + tRNA(Leu) + H(+). It catalyses the reaction N-terminal L-arginyl-[protein] + L-leucyl-tRNA(Leu) = N-terminal L-leucyl-L-arginyl-[protein] + tRNA(Leu) + H(+). The enzyme catalyses L-phenylalanyl-tRNA(Phe) + an N-terminal L-alpha-aminoacyl-[protein] = an N-terminal L-phenylalanyl-L-alpha-aminoacyl-[protein] + tRNA(Phe). Functions in the N-end rule pathway of protein degradation where it conjugates Leu, Phe and, less efficiently, Met from aminoacyl-tRNAs to the N-termini of proteins containing an N-terminal arginine or lysine. This is Leucyl/phenylalanyl-tRNA--protein transferase from Nitrosomonas europaea (strain ATCC 19718 / CIP 103999 / KCTC 2705 / NBRC 14298).